A 189-amino-acid polypeptide reads, in one-letter code: Protein GrpE (189 aa).

A disordered region spans residues 1 to 22 (MKEQQKETEQNIEEINDETVTE). A compositionally biased stretch (acidic residues) spans 10–22 (QNIEEINDETVTE).

Belongs to the GrpE family. In terms of assembly, homodimer.

It localises to the cytoplasm. Functionally, participates actively in the response to hyperosmotic and heat shock by preventing the aggregation of stress-denatured proteins, in association with DnaK and GrpE. It is the nucleotide exchange factor for DnaK and may function as a thermosensor. Unfolded proteins bind initially to DnaJ; upon interaction with the DnaJ-bound protein, DnaK hydrolyzes its bound ATP, resulting in the formation of a stable complex. GrpE releases ADP from DnaK; ATP binding to DnaK triggers the release of the substrate protein, thus completing the reaction cycle. Several rounds of ATP-dependent interactions between DnaJ, DnaK and GrpE are required for fully efficient folding. The chain is Protein GrpE from Leuconostoc citreum (strain KM20).